The following is a 125-amino-acid chain: uncharacterized protein (125 aa).

This is an uncharacterized protein from Pasteurella multocida (strain Pm70).